A 689-amino-acid chain; its full sequence is Elongation factor G (689 aa).

The region spanning Asp-8 to Leu-282 is the tr-type G domain. GTP contacts are provided by residues Ala-17 to Thr-24, Asp-81 to His-85, and Asn-135 to Asp-138.

Belongs to the TRAFAC class translation factor GTPase superfamily. Classic translation factor GTPase family. EF-G/EF-2 subfamily.

Its subcellular location is the cytoplasm. Catalyzes the GTP-dependent ribosomal translocation step during translation elongation. During this step, the ribosome changes from the pre-translocational (PRE) to the post-translocational (POST) state as the newly formed A-site-bound peptidyl-tRNA and P-site-bound deacylated tRNA move to the P and E sites, respectively. Catalyzes the coordinated movement of the two tRNA molecules, the mRNA and conformational changes in the ribosome. This is Elongation factor G from Thermoanaerobacter pseudethanolicus (strain ATCC 33223 / 39E) (Clostridium thermohydrosulfuricum).